The sequence spans 439 residues: Ribosomal protein uS12 methylthiotransferase RimO (439 aa).

Residues 7–122 (QTIAVIALGC…LPDLVFGKNF (116 aa)) enclose the MTTase N-terminal domain. 6 residues coordinate [4Fe-4S] cluster: Cys-16, Cys-52, Cys-85, Cys-155, Cys-159, and Cys-162. Residues 141–369 (SSTIPSAYLK…NAQYNIFQAK (229 aa)) enclose the Radical SAM core domain.

It belongs to the methylthiotransferase family. RimO subfamily. Requires [4Fe-4S] cluster as cofactor.

Its subcellular location is the cytoplasm. It carries out the reaction L-aspartate(89)-[ribosomal protein uS12]-hydrogen + (sulfur carrier)-SH + AH2 + 2 S-adenosyl-L-methionine = 3-methylsulfanyl-L-aspartate(89)-[ribosomal protein uS12]-hydrogen + (sulfur carrier)-H + 5'-deoxyadenosine + L-methionine + A + S-adenosyl-L-homocysteine + 2 H(+). Functionally, catalyzes the methylthiolation of an aspartic acid residue of ribosomal protein uS12. The polypeptide is Ribosomal protein uS12 methylthiotransferase RimO (Endomicrobium trichonymphae).